A 954-amino-acid polypeptide reads, in one-letter code: Valine--tRNA ligase (954 aa).

The short motif at 48 to 58 (PNVTGSLHMGH) is the 'HIGH' region element. A 'KMSKS' region motif is present at residues 560–564 (KMSKS). K563 provides a ligand contact to ATP. The stretch at 883–953 (AGFINKEAEL…LKQQYLAIEA (71 aa)) forms a coiled coil.

This sequence belongs to the class-I aminoacyl-tRNA synthetase family. ValS type 1 subfamily. Monomer.

The protein localises to the cytoplasm. The enzyme catalyses tRNA(Val) + L-valine + ATP = L-valyl-tRNA(Val) + AMP + diphosphate. Its function is as follows. Catalyzes the attachment of valine to tRNA(Val). As ValRS can inadvertently accommodate and process structurally similar amino acids such as threonine, to avoid such errors, it has a 'posttransfer' editing activity that hydrolyzes mischarged Thr-tRNA(Val) in a tRNA-dependent manner. This chain is Valine--tRNA ligase, found in Pasteurella multocida (strain Pm70).